We begin with the raw amino-acid sequence, 149 residues long: UPF0178 protein CPF_2548 (149 aa).

The protein belongs to the UPF0178 family.

This is UPF0178 protein CPF_2548 from Clostridium perfringens (strain ATCC 13124 / DSM 756 / JCM 1290 / NCIMB 6125 / NCTC 8237 / Type A).